Reading from the N-terminus, the 608-residue chain is Phosphogluconate dehydratase (608 aa).

[4Fe-4S] cluster is bound by residues C154 and C221.

The protein belongs to the IlvD/Edd family. Requires [4Fe-4S] cluster as cofactor.

The catalysed reaction is 6-phospho-D-gluconate = 2-dehydro-3-deoxy-6-phospho-D-gluconate + H2O. It participates in carbohydrate metabolism; Entner-Doudoroff pathway. Catalyzes the dehydration of 6-phospho-D-gluconate to 2-dehydro-3-deoxy-6-phospho-D-gluconate. The chain is Phosphogluconate dehydratase from Helicobacter pylori (strain ATCC 700392 / 26695) (Campylobacter pylori).